The chain runs to 520 residues: GMP synthase [glutamine-hydrolyzing] (520 aa).

Residues 8-202 enclose the Glutamine amidotransferase type-1 domain; that stretch reads RLLIIDFGSQ…FVRLAGFSGD (195 aa). Cys86 functions as the Nucleophile in the catalytic mechanism. Catalysis depends on residues His177 and Glu179. In terms of domain architecture, GMPS ATP-PPase spans 203–395; the sequence is WTMGAYREQM…LGLPDSFIGR (193 aa). 230-236 contributes to the ATP binding site; it reads SGGVDSS.

Homodimer.

It catalyses the reaction XMP + L-glutamine + ATP + H2O = GMP + L-glutamate + AMP + diphosphate + 2 H(+). The protein operates within purine metabolism; GMP biosynthesis; GMP from XMP (L-Gln route): step 1/1. In terms of biological role, catalyzes the synthesis of GMP from XMP. This Ruegeria sp. (strain TM1040) (Silicibacter sp.) protein is GMP synthase [glutamine-hydrolyzing].